The following is a 416-amino-acid chain: Serine/threonine-protein kinase 26 (416 aa).

Alanine 2 is subject to N-acetylalanine. Residue serine 4 is modified to Phosphoserine. One can recognise a Protein kinase domain in the interval phenylalanine 24–isoleucine 274. Residues isoleucine 30–valine 38 and lysine 53 contribute to the ATP site. Residue aspartate 144 is the Proton acceptor of the active site. Threonine 178 carries the phosphothreonine; by autocatalysis modification. The disordered stretch occupies residues alanine 296–glutamate 343. Phosphoserine is present on residues serine 300, serine 304, serine 306, serine 309, and serine 325. Threonine 327 and threonine 328 each carry phosphothreonine. Residues lysine 331–asparagine 340 show a composition bias toward basic and acidic residues.

It belongs to the protein kinase superfamily. STE Ser/Thr protein kinase family. STE20 subfamily. As to quaternary structure, homodimer. Interacts with PDCD10. Interacts with GOLGA2. Interacts with CTTNBP2NL. Interacts with RIPOR1 (via C-terminus); this interaction occurs in a PDCD10-dependent and Rho-independent manner. Interacts with PDCD10; this interaction is required for the association of STK26 with RIPOR1. Part of the core of STRIPAK complexes composed of PP2A catalytic and scaffolding subunits, the striatins (PP2A regulatory subunits), the striatin-associated proteins MOB4, STRIP1 and STRIP2, PDCD10 and members of the STE20 kinases, such as STK24 and STK26. Requires Mg(2+) as cofactor.

It localises to the cytoplasm. The protein localises to the golgi apparatus. The enzyme catalyses L-seryl-[protein] + ATP = O-phospho-L-seryl-[protein] + ADP + H(+). It catalyses the reaction L-threonyl-[protein] + ATP = O-phospho-L-threonyl-[protein] + ADP + H(+). Its activity is regulated as follows. Interaction with Golgi matrix protein GOLGA2 leads to autophosphorylation on Thr-178, possibly as a consequence of stabilization of dimer formation. May also be activated by C-terminal cleavage. Its function is as follows. Serine/threonine-protein kinase that acts as a mediator of cell growth. Modulates apoptosis. In association with STK24 negatively regulates Golgi reorientation in polarized cell migration upon RHO activation. Phosphorylates ATG4B at 'Ser-383', thereby increasing autophagic flux. Part of the striatin-interacting phosphatase and kinase (STRIPAK) complexes. STRIPAK complexes have critical roles in protein (de)phosphorylation and are regulators of multiple signaling pathways including Hippo, MAPK, nuclear receptor and cytoskeleton remodeling. Different types of STRIPAK complexes are involved in a variety of biological processes such as cell growth, differentiation, apoptosis, metabolism and immune regulation. The chain is Serine/threonine-protein kinase 26 from Mus musculus (Mouse).